Consider the following 496-residue polypeptide: MELDLLSAIIILVATYIVSLLINQWRKSKSQQNLPPSPPKLPVIGHLHFLWGGLPQHVFRSIAQKYGPVAHVQLGEVYSVVLSSAEAAKQAMKVLDPNFADRFDGIGSRTMWYDKDDIIFSPYNDHWRQMRRICVTELLSPKNVRSFGYIRQEEIERLIRLLGSSGGAPVDVTEEVSKMSCVVVCRAAFGSVLKDQGSLAELVKESLALASGFELADLYPSSWLLNLLSLNKYRLQRMRRRLDHILDGFLEEHREKKSGEFGGEDIVDVLFRMQKGSDIKIPITSNCIKGFIFDTFSAGAETSSTTISWALSELMRNPAKMAKVQAEVREALKGKTVVDLSEVQELKYLRSVLKETLRLHPPFPLIPRQSREECEVNGYTIPAKTRIFINVWAIGRDPQYWEDPDTFRPERFDEVSRDFMGNDFEFIPFGAGRRICPGLHFGLANVEIPLAQLLYHFDWKLPQGMTDADLDMTETPGLSGPKKKNVCLVPTLYKSP.

Residues 2-22 traverse the membrane as a helical; Signal-anchor for type II membrane protein segment; the sequence is ELDLLSAIIILVATYIVSLLI. Residue Cys436 participates in heme binding.

The protein belongs to the cytochrome P450 family. Heme serves as cofactor.

It is found in the endoplasmic reticulum membrane. The catalysed reaction is (4S)-limonene + reduced [NADPH--hemoprotein reductase] + O2 = (1S,5R)-carveol + oxidized [NADPH--hemoprotein reductase] + H2O + H(+). Its function is as follows. Hydroxylates (-)-(4S)-limonene to (-)-trans-carveol, a precursor of (-)-carvone. Fluorinated substrate analogs are hydroxylated with the same regio- and stereochemistry. The chain is Cytochrome P450 71D18 (CYP71D18) from Mentha gracilis (Gingermint).